The following is a 1090-amino-acid chain: MEDVDLGKDRTQLIDFVYANGNGSASNLNNRNNIPLSEKAAKEPLQTQPQEAPPAPKPKVQKQKPPVKPKKRIACSPGSAICLFLLAVAAIIFAAFLGHYLTKQNYEMMQFKSANESMTTCKNFTRSHKKHQDIVNEEDADENASIKQPTKEELALPKNVQPVWYDVSLSPKVGGNGTMGLAHVKLNIEEPTNKIVLNAKDIEFTRNLEKIQLSKEVTKRAKKSVDSGTNSTSEMPEGSGEEAMATTATTTTTESTTPVSSFVDTGIKVTNIEFDENLEKVTLTLDQELKKGSTVVLKIPFTSKVSNNNGLKEYKYKNSEGKEQSMFTTQPSYSYLRHVFPSFDQEAFKAPAAITLMHSKGSIVVANTGVKTKDDGDAQTSTLNKVLDPDFVIGDLVASEVNTTSGITIRIWTRPEVKHSTEQSLDYANQAIDAMEHILQSRLESKSLDIVAVPGFQTGNRVSPSFIVLPEEDILYNEQSNDINQKTRIARMISNRIAAQWFGGITNPEEFGTFWLNEALPRFLEVEALEKILDINSDDLWTYEMEKILERDATATSQPLRVKNVFSSADIAEIDHEFIGKKGAAVLRMIQKSVGVNVFNKAIRSFVSSYRSAYPYDDGLWKSFEKALGGKLKGWNNEPLDVAKFVNTWVDQIGFPLVSVEKLDDETVELSQERFKNDHKTKEQFKFRNAKYWFNWEVPLFLKSSGPVGNVSWLHEAFRLPLNTSDSIYLNTDSNGVYRVNYEEKRWNDIAKQLEKSHGKLSERTRARLISDVFALANSGALPFETALNVTSYLPMETATVPWLIATRIFKKLTERLEGAPIQDKLNSFIYQKIHKKFEEISSSPGEASSNYLKNRLYANLLDLMAIVKPEKSNEKLNELFVEGFLAPCQFSGNFSSDCSEVPGDLREKVYCNGVEFGNDTVFETVRELAEKEVDGAEKDLLQNSLACFRDPRALRRLILDNLNSTSTVTLLLRKMNSRPVGKEIATNWIIDNWSTVLKKKFKNDPETLNAIADAGIILDNEREKSMIETFMEHHHKSTHGIESLDKKIEEATTDIYWRKQKINELNDYLDGKMKGPAKDDEMESSEEQE.

Residues 1–77 (MEDVDLGKDR…KPKKRIACSP (77 aa)) are Cytoplasmic-facing. Positions 21–33 (GNGSASNLNNRNN) are enriched in low complexity. Positions 21–71 (GNGSASNLNNRNNIPLSEKAAKEPLQTQPQEAPPAPKPKVQKQKPPVKPKK) are disordered. Positions 59-71 (KVQKQKPPVKPKK) are enriched in basic residues. A helical; Signal-anchor for type II membrane protein transmembrane segment spans residues 78 to 98 (GSAICLFLLAVAAIIFAAFLG). The Lumenal portion of the chain corresponds to 99–1090 (HYLTKQNYEM…DEMESSEEQE (992 aa)). N-linked (GlcNAc...) asparagine glycans are attached at residues Asn115, Asn123, Asn143, Asn176, and Asn230. Residues 217 to 259 (VTKRAKKSVDSGTNSTSEMPEGSGEEAMATTATTTTTESTTPV) form a disordered region. Positions 241-257 (EEAMATTATTTTTESTT) are enriched in low complexity. N-linked (GlcNAc...) asparagine glycans are attached at residues Asn402, Asn710, Asn723, Asn789, Asn894, Asn919, Asn964, and Asn993. Over residues 1069 to 1080 (YLDGKMKGPAKD) the composition is skewed to basic and acidic residues. Residues 1069–1090 (YLDGKMKGPAKDDEMESSEEQE) form a disordered region. Residues 1081–1090 (DEMESSEEQE) are compositionally biased toward acidic residues.

The protein belongs to the peptidase M1 family.

The protein localises to the membrane. This chain is Aminopeptidase-like protein AC3.5, found in Caenorhabditis elegans.